The sequence spans 524 residues: Putative ribose/galactose/methyl galactoside import ATP-binding protein 1 (524 aa).

2 consecutive ABC transporter domains span residues 35 to 271 (LEVR…VGRE) and 281 to 520 (VPIG…RIMD). 67 to 74 (GENGAGKS) contacts ATP.

This sequence belongs to the ABC transporter superfamily. Carbohydrate importer 2 (CUT2) (TC 3.A.1.2) family.

It localises to the cell inner membrane. The enzyme catalyses D-ribose(out) + ATP + H2O = D-ribose(in) + ADP + phosphate + H(+). It carries out the reaction D-galactose(out) + ATP + H2O = D-galactose(in) + ADP + phosphate + H(+). Functionally, part of an ABC transporter complex involved in carbohydrate import. Could be involved in ribose, galactose and/or methyl galactoside import. Responsible for energy coupling to the transport system. The polypeptide is Putative ribose/galactose/methyl galactoside import ATP-binding protein 1 (Burkholderia cenocepacia (strain HI2424)).